Here is a 368-residue protein sequence, read N- to C-terminus: Flap endonuclease 1 (368 aa).

An N-domain region spans residues 1 to 104 (MGIHDLSKVI…GELLKRGARR (104 aa)). Residue aspartate 34 coordinates Mg(2+). DNA-binding residues include arginine 47 and arginine 70. Aspartate 86 is a binding site for Mg(2+). Positions 103–123 (RRKEAQANLEEATEQGDTEQM) are disordered. The tract at residues 122 to 251 (QMEKFSRRLV…QKAYQLIKEH (130 aa)) is I-domain. Residues glutamate 158, glutamate 160, aspartate 179, and aspartate 181 each contribute to the Mg(2+) site. Glutamate 158 contributes to the DNA binding site. Residues glycine 229 and aspartate 231 each contribute to the DNA site. Position 231 (aspartate 231) interacts with Mg(2+). The tract at residues 334–342 (QQGRLDSFF) is interaction with PCNA.

This sequence belongs to the XPG/RAD2 endonuclease family. FEN1 subfamily. Interacts with PCNA. Three molecules of FEN1 bind to one PCNA trimer with each molecule binding to one PCNA monomer. PCNA stimulates the nuclease activity without altering cleavage specificity. The cofactor is Mg(2+). In terms of processing, phosphorylated. Phosphorylation upon DNA damage induces relocalization to the nuclear plasma.

It is found in the nucleus. The protein localises to the nucleolus. The protein resides in the nucleoplasm. Its subcellular location is the mitochondrion. Its function is as follows. Structure-specific nuclease with 5'-flap endonuclease and 5'-3' exonuclease activities involved in DNA replication and repair. During DNA replication, cleaves the 5'-overhanging flap structure that is generated by displacement synthesis when DNA polymerase encounters the 5'-end of a downstream Okazaki fragment. It enters the flap from the 5'-end and then tracks to cleave the flap base, leaving a nick for ligation. Also involved in the long patch base excision repair (LP-BER) pathway, by cleaving within the apurinic/apyrimidinic (AP) site-terminated flap. Acts as a genome stabilization factor that prevents flaps from equilibrating into structures that lead to duplications and deletions. Also possesses 5'-3' exonuclease activity on nicked or gapped double-stranded DNA, and exhibits RNase H activity. Also involved in replication and repair of rDNA and in repairing mitochondrial DNA. This Monosiga brevicollis (Choanoflagellate) protein is Flap endonuclease 1.